Consider the following 145-residue polypeptide: Trafficking protein particle complex subunit 1 (145 aa).

This sequence belongs to the TRAPP small subunits family. BET5 subfamily. In terms of assembly, part of the multisubunit transport protein particle (TRAPP) complex. The heterodimer TRAPPC6B-TRAPPC3 interacts with TRAPPC1 likely providing a core for TRAPP complex formation.

The protein localises to the golgi apparatus. It localises to the cis-Golgi network. It is found in the endoplasmic reticulum. May play a role in vesicular transport from endoplasmic reticulum to Golgi. This chain is Trafficking protein particle complex subunit 1 (TRAPPC1), found in Bos taurus (Bovine).